Reading from the N-terminus, the 351-residue chain is UDP-N-acetylglucosamine--N-acetylmuramyl-(pentapeptide) pyrophosphoryl-undecaprenol N-acetylglucosamine transferase (351 aa).

Residues 12 to 14 (TGG), asparagine 124, arginine 160, serine 188, isoleucine 239, 258 to 263 (ALTVCE), and glutamine 283 contribute to the UDP-N-acetyl-alpha-D-glucosamine site.

This sequence belongs to the glycosyltransferase 28 family. MurG subfamily.

The protein localises to the cell inner membrane. It catalyses the reaction di-trans,octa-cis-undecaprenyl diphospho-N-acetyl-alpha-D-muramoyl-L-alanyl-D-glutamyl-meso-2,6-diaminopimeloyl-D-alanyl-D-alanine + UDP-N-acetyl-alpha-D-glucosamine = di-trans,octa-cis-undecaprenyl diphospho-[N-acetyl-alpha-D-glucosaminyl-(1-&gt;4)]-N-acetyl-alpha-D-muramoyl-L-alanyl-D-glutamyl-meso-2,6-diaminopimeloyl-D-alanyl-D-alanine + UDP + H(+). The protein operates within cell wall biogenesis; peptidoglycan biosynthesis. In terms of biological role, cell wall formation. Catalyzes the transfer of a GlcNAc subunit on undecaprenyl-pyrophosphoryl-MurNAc-pentapeptide (lipid intermediate I) to form undecaprenyl-pyrophosphoryl-MurNAc-(pentapeptide)GlcNAc (lipid intermediate II). In Actinobacillus pleuropneumoniae serotype 5b (strain L20), this protein is UDP-N-acetylglucosamine--N-acetylmuramyl-(pentapeptide) pyrophosphoryl-undecaprenol N-acetylglucosamine transferase.